Here is a 566-residue protein sequence, read N- to C-terminus: Glutamate--tRNA ligase (566 aa).

The short motif at 105-115 (PNPDGPIHLGN) is the 'HIGH' region element.

Belongs to the class-I aminoacyl-tRNA synthetase family. Glutamate--tRNA ligase type 2 subfamily.

The protein resides in the cytoplasm. The enzyme catalyses tRNA(Glu) + L-glutamate + ATP = L-glutamyl-tRNA(Glu) + AMP + diphosphate. Functionally, catalyzes the attachment of glutamate to tRNA(Glu) in a two-step reaction: glutamate is first activated by ATP to form Glu-AMP and then transferred to the acceptor end of tRNA(Glu). In Sulfurisphaera tokodaii (strain DSM 16993 / JCM 10545 / NBRC 100140 / 7) (Sulfolobus tokodaii), this protein is Glutamate--tRNA ligase.